The following is a 472-amino-acid chain: Glutamate--tRNA ligase (472 aa).

The 'HIGH' region signature appears at 10–20 (PSPTGYLHVGG). The Zn(2+) site is built by Cys99, Cys101, Cys126, and Asp128. The short motif at 238–242 (KLSKR) is the 'KMSKS' region element. Lys241 is a binding site for ATP.

This sequence belongs to the class-I aminoacyl-tRNA synthetase family. Glutamate--tRNA ligase type 1 subfamily. As to quaternary structure, monomer. Requires Zn(2+) as cofactor.

Its subcellular location is the cytoplasm. It catalyses the reaction tRNA(Glu) + L-glutamate + ATP = L-glutamyl-tRNA(Glu) + AMP + diphosphate. Functionally, catalyzes the attachment of glutamate to tRNA(Glu) in a two-step reaction: glutamate is first activated by ATP to form Glu-AMP and then transferred to the acceptor end of tRNA(Glu). The protein is Glutamate--tRNA ligase of Photorhabdus laumondii subsp. laumondii (strain DSM 15139 / CIP 105565 / TT01) (Photorhabdus luminescens subsp. laumondii).